Here is a 596-residue protein sequence, read N- to C-terminus: Histone deacetylase 9 (596 aa).

2 stretches are compositionally biased toward basic and acidic residues: residues 132-153 (REKE…HRQE) and 160-172 (RSKD…AVAS). 4 disordered regions span residues 132 to 172 (REKE…AVAS), 214 to 258 (HTSL…VRSR), 293 to 313 (SSVS…GPVA), and 522 to 596 (QPEG…QQVT). Residues 172–222 (STEVKQKLQEFILSKSATKEPLTNGTSHSMGRHPKLWYTAAHHTSLDQSSP) form an interaction with mef2 region. Residues 221–237 (SPPPSGTSPTYKCPPPG) show a composition bias toward pro residues. Low complexity predominate over residues 293 to 312 (SSVSSSSPVSGPSSPNNGPV). Basic and acidic residues predominate over residues 522-536 (QPEGHLEEAEEDLHG). The segment covering 541–558 (QEKSSSIDNTRSYSSTDL) has biased composition (polar residues). The span at 567-585 (KVKEEPPDSENEIKTHLQS) shows a compositional bias: basic and acidic residues. Over residues 586-596 (EQKSVFAQQVT) the composition is skewed to polar residues.

This sequence belongs to the histone deacetylase family. HD type 2 subfamily. Homodimer. Interacts with mef2. As to expression, broadly expressed.

It is found in the nucleus. The enzyme catalyses N(6)-acetyl-L-lysyl-[histone] + H2O = L-lysyl-[histone] + acetate. Devoided of intrinsic deacetylase activity, promotes the deacetylation of lysine residues on the N-terminal part of the core histones (H2A, H2B, H3 and H4) by recruiting other histone deacetylases. Histone deacetylation gives a tag for epigenetic repression and plays an important role in transcriptional regulation, cell cycle progression and developmental events. Represses MEF2-dependent transcription. The sequence is that of Histone deacetylase 9 (hdac9) from Xenopus laevis (African clawed frog).